An 886-amino-acid chain; its full sequence is Translation initiation factor IF-2 (886 aa).

Disordered regions lie at residues 1 to 25 (MSET…LKRP), 50 to 229 (RRAL…PAEE), and 253 to 272 (KGAE…TGDE). Residues 50–60 (RRALGEPHVLR) are compositionally biased toward basic and acidic residues. Positions 63–73 (APALDVVAPAP) are enriched in low complexity. Residues 74-83 (QAAPPAPTQQ) show a composition bias toward pro residues. Positions 84–106 (PQPRVASRPQPQQRSSSGVILRS) are enriched in low complexity. Over residues 107–181 (LTEEEREARS…KRRSESEAKR (75 aa)) the composition is skewed to basic and acidic residues. Low complexity predominate over residues 185 to 225 (GGEPAPAGANAAPRKAPALSAAPGSAAPSGQPGPAGAVGAR). Positions 383 to 553 (SRPPVVTIMG…ALQAELLDLK (171 aa)) constitute a tr-type G domain. A G1 region spans residues 392–399 (GHVDHGKT). 392 to 399 (GHVDHGKT) is a binding site for GTP. The interval 417–421 (GITQH) is G2. The tract at residues 439 to 442 (DTPG) is G3. GTP is bound by residues 439–443 (DTPGH) and 493–496 (NKID). Residues 493 to 496 (NKID) are G4. Positions 529 to 531 (SAT) are G5.

It belongs to the TRAFAC class translation factor GTPase superfamily. Classic translation factor GTPase family. IF-2 subfamily.

The protein resides in the cytoplasm. One of the essential components for the initiation of protein synthesis. Protects formylmethionyl-tRNA from spontaneous hydrolysis and promotes its binding to the 30S ribosomal subunits. Also involved in the hydrolysis of GTP during the formation of the 70S ribosomal complex. In Methylocella silvestris (strain DSM 15510 / CIP 108128 / LMG 27833 / NCIMB 13906 / BL2), this protein is Translation initiation factor IF-2.